Reading from the N-terminus, the 350-residue chain is Small ribosomal subunit biogenesis GTPase RsgA (350 aa).

Polar residues predominate over residues 1–17 (MSKNKLSKGQQRRVNAN). The tract at residues 1–24 (MSKNKLSKGQQRRVNANHQRRLKT) is disordered. The region spanning 104–273 (TSVLTRPDFY…VIDSPGVREF (170 aa)) is the CP-type G domain. GTP-binding positions include 160-163 (NKID) and 214-222 (GQSGVGKSS). C297, C302, H304, and C310 together coordinate Zn(2+).

Belongs to the TRAFAC class YlqF/YawG GTPase family. RsgA subfamily. As to quaternary structure, monomer. Associates with 30S ribosomal subunit, binds 16S rRNA. It depends on Zn(2+) as a cofactor.

It localises to the cytoplasm. One of several proteins that assist in the late maturation steps of the functional core of the 30S ribosomal subunit. Helps release RbfA from mature subunits. May play a role in the assembly of ribosomal proteins into the subunit. Circularly permuted GTPase that catalyzes slow GTP hydrolysis, GTPase activity is stimulated by the 30S ribosomal subunit. The polypeptide is Small ribosomal subunit biogenesis GTPase RsgA (Salmonella schwarzengrund (strain CVM19633)).